The primary structure comprises 739 residues: MLRSELRDMVVAMVLWGILLPFCLSQTTSPSQDGKIKFRLAGYPRKHNEGRIEVFYNREWGTICDDDFTLANAHVLCRQLGFVEALSWSHSAKYGPGSGKIWLDNVICGGSENSIEKCVSRGWGNSDCTHQEDAGVICKDERLPGFAESNIIEMQVDEKRMEKIRLRPLKGAHAGRLPVTEGVVEVKFKEGWGHICNTGWTIKNSRVVCGMMGFPSQRSVGKKPNSLKSAYRIHSVTCSGNEAHLSACTMEFSRANSSAPCPGGGAAVVSCVPGLQFTQGRVRKAKLNPVPQMRLKGGARAGEGRVEVLKGSEWGTVCDDHWNLQSASVVCRELGFGTAKEALTGARMGQGMGPIYMNEVQCGGDEKSLWDCPHQSITAEDCKHTEDASVICNIPYMGFEKLMRLTGGRTRLEGRVELLLPAGGGVRDWGLICGDGWTSREAMVVCRQLGLGHASSGLRETWYWDSSNVTEMVMSGVKCKGDEMTLTDCQHHSVVSCKRAGAQFSAGVICSDMASDLVLNAPLVEQTVYIEDRPLHLLYCAAEENCLAKSAAQASWPYGHRRLLRFSSEIHNIGKADFRPRLGRHSWVWHECHRHYHSMDIFTYYDLLSLNGTKVADGHKASFCLEDTECHEGVSKRYECANFGEQGITVGCWDLYRHDIDCQWIDITDVSPGNYILQVIINPNFEVAESDFTNNAMRCNCKYDGHRVWLHKCHLGDSFSEEAEKEFEHYPGQLNNKIS.

Residues 1–25 (MLRSELRDMVVAMVLWGILLPFCLS) form the signal peptide. 4 SRCR domains span residues 38–139 (FRLA…VICK), 166–272 (LRPL…VSCV), 293–393 (MRLK…VICN), and 403–511 (MRLT…VICS). Cystine bridges form between C64/C128, C77/C138, C108/C118, C196/C261, C209/C271, C238/C248, C318/C382, C331/C392, C362/C372, C433/C497, C446/C510, and C479/C489. N256 carries N-linked (GlcNAc...) asparagine glycosylation. N-linked (GlcNAc...) asparagine glycosylation is present at N468. N-linked (GlcNAc...) asparagine glycosylation is present at N611. The lysine tyrosylquinone (Lys-Tyr) cross-link spans 620-656 (KASFCLEDTECHEGVSKRYECANFGEQGITVGCWDLY). Position 656 is a 2',4',5'-topaquinone (Y656).

It belongs to the lysyl oxidase family. Cu cation is required as a cofactor. Requires lysine tyrosylquinone residue as cofactor. The lysine tyrosylquinone cross-link (LTQ) is generated by condensation of the epsilon-amino group of a lysine with a topaquinone produced by oxidation of tyrosine.

The protein localises to the secreted. It localises to the extracellular space. It is found in the cytoplasm. Its subcellular location is the nucleus. It carries out the reaction L-lysyl-[protein] + O2 + H2O = (S)-2-amino-6-oxohexanoyl-[protein] + H2O2 + NH4(+). The enzyme catalyses N(6)-acetyl-L-lysyl-[protein] + O2 + H2O = acetamide + (S)-2-amino-6-oxohexanoyl-[protein] + H2O2. Functionally, protein-lysine 6-oxidase that mediates the oxidation of peptidyl lysine residues to allysine in target proteins. Catalyzes the post-translational oxidative deamination of peptidyl lysine residues in precursors of elastin and different types of collagens, a prerequisite in the formation of cross-links between collagens and elastin. Can mediate oxidation of lysine residues that are acetylated. Also able to catalyze deacetylation of lysine residues. The protein is Lysyl oxidase homolog 3A of Danio rerio (Zebrafish).